The sequence spans 105 residues: Large ribosomal subunit protein uL24 (105 aa).

It belongs to the universal ribosomal protein uL24 family. In terms of assembly, part of the 50S ribosomal subunit.

Its function is as follows. One of two assembly initiator proteins, it binds directly to the 5'-end of the 23S rRNA, where it nucleates assembly of the 50S subunit. Functionally, one of the proteins that surrounds the polypeptide exit tunnel on the outside of the subunit. The sequence is that of Large ribosomal subunit protein uL24 from Xanthomonas oryzae pv. oryzae (strain MAFF 311018).